We begin with the raw amino-acid sequence, 147 residues long: Large ribosomal subunit protein uL15 (147 aa).

Positions 1–20 are enriched in basic and acidic residues; sequence MTLRLNDLKPADGARTERTR. The tract at residues 1 to 61 is disordered; the sequence is MTLRLNDLKP…GFEGGQTPMQ (61 aa). Positions 23 to 33 are enriched in gly residues; sequence RGIGSGLGKTA. Over residues 34-47 the composition is skewed to basic residues; sequence GRGHKGSFARKGGG.

It belongs to the universal ribosomal protein uL15 family. Part of the 50S ribosomal subunit.

In terms of biological role, binds to the 23S rRNA. The sequence is that of Large ribosomal subunit protein uL15 from Xanthomonas euvesicatoria pv. vesicatoria (strain 85-10) (Xanthomonas campestris pv. vesicatoria).